The following is a 179-amino-acid chain: Ribosome maturation factor RimM (179 aa).

The region spanning 95-174 (KDEFFYFDIL…QIFCTQDAFL (80 aa)) is the PRC barrel domain.

Belongs to the RimM family. In terms of assembly, binds ribosomal protein uS19.

The protein localises to the cytoplasm. Its function is as follows. An accessory protein needed during the final step in the assembly of 30S ribosomal subunit, possibly for assembly of the head region. Essential for efficient processing of 16S rRNA. May be needed both before and after RbfA during the maturation of 16S rRNA. It has affinity for free ribosomal 30S subunits but not for 70S ribosomes. This Campylobacter jejuni subsp. jejuni serotype O:6 (strain 81116 / NCTC 11828) protein is Ribosome maturation factor RimM.